The primary structure comprises 449 residues: MFKTLTQNLTKIFDKLVSSGILTEAQIDAAMRDIRVALLESDVALPVIKDFIAEVKQKALGQEVIKSVSPGQMIIKIIHEEMINLLASSESETKLNLNSKPPVNFLMVGLQGSGKTTASSKLALRLKNQNKKVLLVSLDTYRPAAQEQLAILANSVQINSLPIVQGEKPLDIVKRAIAEAKISAYGVVIYDTAGRTQIDKEMMEEALAIKKIVEPTETLLVIDSMTGQDAVVTANSFNEKLEISGLILSRIDGDSKGGAALSVKYITKKPIKFLSSGEKLTDLEEFDAERLASRILDMGDIISFVEKAASIVDREEAEKTAAKLKKGKFDLNDYLQQMRSIKKMGGFGSILSMLPGSGKIMDQIDQSKLNSKIIEHQEAIILSMTLKERENPDIINASRRKRIAAGAGTTVQKVNILLKQYKQISEMMKKASKMNPKNLLRNGIGKLFS.

GTP is bound by residues Gly109–Thr116, Asp191–Arg195, and Ser249–Asp252.

This sequence belongs to the GTP-binding SRP family. SRP54 subfamily. Part of the signal recognition particle protein translocation system, which is composed of SRP and FtsY. SRP is a ribonucleoprotein composed of Ffh and a 4.5S RNA molecule.

Its subcellular location is the cytoplasm. It carries out the reaction GTP + H2O = GDP + phosphate + H(+). Its function is as follows. Involved in targeting and insertion of nascent membrane proteins into the cytoplasmic membrane. Binds to the hydrophobic signal sequence of the ribosome-nascent chain (RNC) as it emerges from the ribosomes. The SRP-RNC complex is then targeted to the cytoplasmic membrane where it interacts with the SRP receptor FtsY. Interaction with FtsY leads to the transfer of the RNC complex to the Sec translocase for insertion into the membrane, the hydrolysis of GTP by both Ffh and FtsY, and the dissociation of the SRP-FtsY complex into the individual components. This chain is Signal recognition particle protein, found in Rickettsia felis (strain ATCC VR-1525 / URRWXCal2) (Rickettsia azadi).